The primary structure comprises 2622 residues: Ankyrin-3 (2622 aa).

Positions 1–44 are disordered; that stretch reads MAHAASQLKKNRDLEINAEEETEKKKKHRKRSRDRKKKSDANAS. A compositionally biased stretch (basic residues) spans 25-38; it reads KKKHRKRSRDRKKK. Residue S39 is modified to Phosphoserine. ANK repeat units lie at residues 73–102, 106–135, 139–168, 172–201, 203–230, 242–271, 275–304, 308–337, 341–370, 374–403, 407–436, 440–469, 473–502, 506–535, 539–568, 572–601, 605–634, 638–667, 671–700, 704–733, 737–766, 770–799, and 803–832; these read NGLNALHLASKEGHVEVVSELLQREANVDA, KGNTALHIASLAGQAEVVKVLVTNGANVNA, NGFTPLYMAAQENHLEVVRFLLDNGASQSL, DGFTPLAVALQQGHDQVVSLLLENDTKGKV, LPALHIAARKDDTKAAALLLQNDTNADI, SGFTPLHIAAHYGNINVATLLLNRAAAVDF, NDITPLHVASKRGNANMVKLLLDRGAKIDA, DGLTPLHCGARSGHEQVVEMLLDRAAPILS, NGLSPLHMATQGDHLNCVQLLLQHNVPVDD, DYLTALHVAAHCGHYKVAKVLLDKKANPNA, NGFTPLHIACKKNRIRVMELLLKHGASIQA, SGLTPIHVAAFMGHVNIVSQLMHHGASPNT, RGETALHMAARSGQAEVVRYLVQDGAQVEA, DDQTPLHISARLGKADIVQQLLQQGASPNA, SGYTPLHLSAREGHEDVAAFLLDHGASLSI, KGFTPLHVAAKYGKLEVASLLLQKSASPDA, SGLTPLHVAAHYDNQKVALLLLDQGASPHA, NGYTPLHIAAKKNQMDIATSLLEYGADANA, QGIASVHLAAQEGHVDMVSLLLSRNANVNL, SGLTPLHLAAQEDRVNVAEVLVNQGAHVDA, MGYTPLHVGCHYGNIKIVNFLLQHSAKVNA, NGYTPLHQAAQQGHTHIINVLLQNNASPNE, and NGNTALAIARRLGYISVVDTLKVVTEEIMT. S631 bears the Phosphoserine mark. V851, S855, S869, S875, S921, S924, S930, S965, S967, and S1121 each carry phosphoserine. A disordered region spans residues 868-889; it reads LSDGEYISDGEEGEDAITGDTD. Residues 873-884 are compositionally biased toward acidic residues; it reads YISDGEEGEDAI. 2 consecutive ZU5 domains span residues 992–1147 and 1149–1296; these read FLVS…VVSR and KQES…LADC. 2 positions are modified to phosphoserine: S1458 and S1469. The interval 1510-1539 is disordered; it reads TPITVPGPAKSGSLSSSPSNTPSASPLKSI. Residues 1515–1536 show a composition bias toward low complexity; it reads PGPAKSGSLSSSPSNTPSASPL. S1621, S1624, S1679, S1984, S2102, S2114, and S2117 each carry phosphoserine. 3 disordered regions span residues 1968 to 1992, 2099 to 2147, and 2292 to 2312; these read VESKGPPKSPKSDKGHSPEDDWTEF, ILES…FHEV, and SPDVAKSAAETSAQHAEKDNQ. The segment covering 1977 to 1986 has biased composition (basic and acidic residues); the sequence is PKSDKGHSPE. The span at 2106 to 2127 shows a compositional bias: basic and acidic residues; sequence FSQHDQDKSPLSDSGFETRSEK. The segment covering 2128–2137 has biased composition (polar residues); it reads TPSAPQSAES. The Death domain maps to 2336–2420; that stretch reads TDIRMAIVAD…DIVTLLEGPI (85 aa). Residues S2457, S2475, and S2544 each carry the phosphoserine modification. Positions 2568-2622 are disordered; that stretch reads CVPVGMKKMTRTPADGKARLNLQEEEGSARSEPKQGEGYKVKTKKEIRNVEKKAH. Residues 2594 to 2622 are compositionally biased toward basic and acidic residues; that stretch reads GSARSEPKQGEGYKVKTKKEIRNVEKKAH.

In terms of assembly, may be a constituent of a NFASC/NRCAM/ankyrin G complex. Interacts with RHBG. Directly interacts with DMD and betaDAG1; this interaction does not interfere with DMD-binding and is required for DMD and betaDAG1 retention at costameres. Interacts (via N-terminal ANK repeats) with SCHIP1 isoform 7 (via C-terminus); this interaction is required for the localization at axon initial segments (AISs) and nodes of Ranvier (NRs). Interacts with PLEC and FLNC. Interacts (via ANK repeats) with IQCJ-SCHIP1; required for IQCJ-SCHIP1 localization at axon initial segments (AIS) and nodes of Ranvier. Interacts with SCHIP1. Interacts with KCNA1; this inhibits channel activity. Interacts with SCN5A. Interacts with PKP2 and GJA1/CX43. As to quaternary structure, interacts (via its C-terminal muscle-specific Obscurin/Titin-Binding-related domain sequence) with PLEC and FLNC. In terms of tissue distribution, expressed in the heart (at protein level). Expressed in skeletal muscle (at protein level). Expressed at highest levels in brain and testis, followed by skin, kidney, liver and spleen. As to expression, may be specifically expressed in muscle tissues, including heart and skeletal muscle (extensor digitorum longus) (at protein level). Expressed in skeletal muscle, brain, lung, heart, testes and kidney.

The protein resides in the cytoplasm. It localises to the cytoskeleton. Its subcellular location is the cell projection. The protein localises to the axon. It is found in the cell membrane. The protein resides in the sarcolemma. It localises to the postsynaptic cell membrane. Its subcellular location is the lysosome. The protein localises to the T-tubule. Its function is as follows. Membrane-cytoskeleton linker. May participate in the maintenance/targeting of ion channels and cell adhesion molecules at the nodes of Ranvier and axonal initial segments. In skeletal muscle, required for costamere localization of DMD and betaDAG1. Regulates KCNA1 channel activity in function of dietary Mg(2+) levels, and thereby contributes to the regulation of renal Mg(2+) reabsorption. Required for intracellular adhesion and junctional conductance in myocytes, potentially via stabilization of GJA1/CX43 protein abundance and promotion of PKP2, GJA1/CX43, and SCN5A/Nav1.5 localization to cell-cell junctions. This chain is Ankyrin-3 (Ank3), found in Rattus norvegicus (Rat).